The sequence spans 145 residues: Transcription antitermination protein NusB (145 aa).

Belongs to the NusB family.

Involved in transcription antitermination. Required for transcription of ribosomal RNA (rRNA) genes. Binds specifically to the boxA antiterminator sequence of the ribosomal RNA (rrn) operons. The protein is Transcription antitermination protein NusB of Burkholderia lata (strain ATCC 17760 / DSM 23089 / LMG 22485 / NCIMB 9086 / R18194 / 383).